The primary structure comprises 380 residues: Cytochrome b (380 aa).

The next 4 helical transmembrane spans lie at 34 to 54 (FGSL…LLAT), 78 to 99 (WLIR…YLHI), 114 to 134 (WNTG…GYVL), and 179 to 199 (FFAL…IHLA). Heme b contacts are provided by His84 and His98. Heme b is bound by residues His183 and His197. Residue His202 participates in a ubiquinone binding. Helical transmembrane passes span 227 to 247 (LKDI…ALFS), 289 to 309 (LGGV…PFLH), 321 to 341 (LSQI…WIGS), and 348 to 368 (FIII…ILFP).

The protein belongs to the cytochrome b family. In terms of assembly, the cytochrome bc1 complex contains 11 subunits: 3 respiratory subunits (MT-CYB, CYC1 and UQCRFS1), 2 core proteins (UQCRC1 and UQCRC2) and 6 low-molecular weight proteins (UQCRH/QCR6, UQCRB/QCR7, UQCRQ/QCR8, UQCR10/QCR9, UQCR11/QCR10 and a cleavage product of UQCRFS1). This cytochrome bc1 complex then forms a dimer. Requires heme b as cofactor.

The protein resides in the mitochondrion inner membrane. Component of the ubiquinol-cytochrome c reductase complex (complex III or cytochrome b-c1 complex) that is part of the mitochondrial respiratory chain. The b-c1 complex mediates electron transfer from ubiquinol to cytochrome c. Contributes to the generation of a proton gradient across the mitochondrial membrane that is then used for ATP synthesis. The polypeptide is Cytochrome b (MT-CYB) (Callipepla gambelii (Gambel's quail)).